Consider the following 335-residue polypeptide: uncharacterized protein (335 aa).

This is an uncharacterized protein from Schizosaccharomyces pombe (strain 972 / ATCC 24843) (Fission yeast).